The chain runs to 319 residues: Type II methyltransferase M.MpnI (319 aa).

It belongs to the N(4)/N(6)-methyltransferase family.

The enzyme catalyses a 2'-deoxyadenosine in DNA + S-adenosyl-L-methionine = an N(6)-methyl-2'-deoxyadenosine in DNA + S-adenosyl-L-homocysteine + H(+). A methylase that recognizes the double-stranded sequence 5'-CTAT-3' and methylates A-3 on one strand; probably responsible for all of the methylation on this site in the genome. The chain is Type II methyltransferase M.MpnI from Mycoplasma pneumoniae (strain ATCC 29342 / M129 / Subtype 1) (Mycoplasmoides pneumoniae).